The primary structure comprises 214 residues: Histidine biosynthesis bifunctional protein HisIE (214 aa).

The tract at residues 1–114 is phosphoribosyl-AMP cyclohydrolase; the sequence is MDLSAVRFDE…LEGEKDLGFV (114 aa). Residues 115-214 are phosphoribosyl-ATP pyrophosphohydrolase; sequence VGQVYATIKE…RSPYDGSHGN (100 aa).

The protein in the N-terminal section; belongs to the PRA-CH family. In the C-terminal section; belongs to the PRA-PH family.

The protein resides in the cytoplasm. It catalyses the reaction 1-(5-phospho-beta-D-ribosyl)-ATP + H2O = 1-(5-phospho-beta-D-ribosyl)-5'-AMP + diphosphate + H(+). It carries out the reaction 1-(5-phospho-beta-D-ribosyl)-5'-AMP + H2O = 1-(5-phospho-beta-D-ribosyl)-5-[(5-phospho-beta-D-ribosylamino)methylideneamino]imidazole-4-carboxamide. Its pathway is amino-acid biosynthesis; L-histidine biosynthesis; L-histidine from 5-phospho-alpha-D-ribose 1-diphosphate: step 2/9. It participates in amino-acid biosynthesis; L-histidine biosynthesis; L-histidine from 5-phospho-alpha-D-ribose 1-diphosphate: step 3/9. The sequence is that of Histidine biosynthesis bifunctional protein HisIE from Thermus thermophilus (strain ATCC BAA-163 / DSM 7039 / HB27).